The primary structure comprises 498 residues: ATP synthase subunit beta, chloroplastic (498 aa).

An ATP-binding site is contributed by 172–179 (GGAGVGKT).

Belongs to the ATPase alpha/beta chains family. In terms of assembly, F-type ATPases have 2 components, CF(1) - the catalytic core - and CF(0) - the membrane proton channel. CF(1) has five subunits: alpha(3), beta(3), gamma(1), delta(1), epsilon(1). CF(0) has four main subunits: a(1), b(1), b'(1) and c(9-12).

Its subcellular location is the plastid. The protein resides in the chloroplast thylakoid membrane. It carries out the reaction ATP + H2O + 4 H(+)(in) = ADP + phosphate + 5 H(+)(out). Functionally, produces ATP from ADP in the presence of a proton gradient across the membrane. The catalytic sites are hosted primarily by the beta subunits. This is ATP synthase subunit beta, chloroplastic from Nymphaea alba (White water-lily).